The chain runs to 381 residues: Regulatory protein RapF (381 aa).

Positions 40, 43, and 45 each coordinate Mn(2+). TPR repeat units lie at residues 101-137 (YYFN…VKDR), 148-181 (SESY…NIRL), 182-215 (LQCH…AEAE), 222-255 (GRTL…FEES), 262-295 (PQAY…SQKA), and 337-370 (EDFA…RQLI).

Belongs to the Rap family. In terms of assembly, monomer. Is monomeric either alone or in complex with PhrF. Interacts specifically with the C-terminal DNA-binding domain of ComA. Interacts with PhrF.

The protein localises to the cytoplasm. Its activity is regulated as follows. Inhibited by PhrF, which prevents RapF-ComA interaction. Interaction with PhrF induces a conformational change in RapF, which is propagated to the ComA binding site and causes the dissociation of ComA from RapF. Involved in the regulation of genetic competence development. Inhibits the activity of ComA, a transcriptional factor that regulates the development of genetic competence. Acts by binding to ComA, leading to the inhibition of its DNA-binding activity. May also affect transcription independently of ComA. The chain is Regulatory protein RapF (rapF) from Bacillus subtilis (strain 168).